Here is a 408-residue protein sequence, read N- to C-terminus: Peptidase T (408 aa).

Residue His78 participates in Zn(2+) binding. Asp80 is a catalytic residue. A Zn(2+)-binding site is contributed by Asp141. The active-site Proton acceptor is the Glu175. Zn(2+) contacts are provided by Glu176, Asp198, and His380.

This sequence belongs to the peptidase M20B family. Zn(2+) serves as cofactor.

The protein localises to the cytoplasm. It carries out the reaction Release of the N-terminal residue from a tripeptide.. Functionally, cleaves the N-terminal amino acid of tripeptides. This is Peptidase T from Clostridium botulinum (strain ATCC 19397 / Type A).